Here is a 341-residue protein sequence, read N- to C-terminus: MVGEMETKEKPKPTPDYLMQLMNDKKLMSSLPNFCGIFTHLERLLDEEISRVRKDMYNDTMNSSSNEKRTSELPDGIGPIVQLQEKLYVPVKEYPDFNFVGRILGPRGLTAKQLEAETGCKIMVRGKGSMRDKKKEEQNRGKPNWEHLNEDLHVLITVEDAQNRAELKLKRAVEEVKKLLVPAAEGEDSLKKMQLMELAILNGTYRDANLKSPALAFSLAATGQAPRIITGPAPVLSPAALRTPTPAGHTLMPLIRQIQTAVMPNGTPHPTATLMQQAPEGGLIYTPYEYPYTLAPATSILEYPIEASGVLGAVATKVRRHDMRVHPYQRIVTADRAATGN.

Residues 88–154 form the KH domain; sequence YVPVKEYPDF…WEHLNEDLHV (67 aa). The Nuclear localization signal motif lies at 324-330; it reads RVHPYQR.

The protein belongs to the quaking family. In terms of assembly, homodimer; does not require RNA to homodimerize.

The protein localises to the nucleus. It is found in the cytoplasm. Its function is as follows. RNA reader protein, which recognizes and binds specific RNAs, thereby regulating RNA metabolic processes, such as pre-mRNA splicing, circular RNA (circRNA) formation, mRNA export, mRNA stability and/or translation. Involved in various cellular processes, such as mRNA storage into stress granules, apoptosis, interferon response, glial cell fate and development. Binds to the 5'-NACUAAY-N(1,20)-UAAY-3' RNA core sequence. Acts as a mRNA modification reader that specifically recognizes and binds mRNA transcripts modified by internal N(7)-methylguanine (m7G). Promotes the formation of circular RNAs (circRNAs): acts by binding to sites flanking circRNA-forming exons. CircRNAs are produced by back-splicing circularization of pre-mRNAs. Required to protect and promote stability of mRNAs which promotes oligodendrocyte differentiation. Acts as an important regulator of muscle development. Essential for notochord development. The polypeptide is KH domain-containing RNA-binding protein qki.S (Xenopus laevis (African clawed frog)).